The sequence spans 394 residues: Elongation factor Tu (394 aa).

Positions 10–204 (KEHANIGTIG…AVDDYIPTPE (195 aa)) constitute a tr-type G domain. Residues 19-26 (GHVDHGKT) are G1. Position 19–26 (19–26 (GHVDHGKT)) interacts with GTP. Threonine 26 lines the Mg(2+) pocket. The interval 60-64 (GITIN) is G2. A G3 region spans residues 81–84 (DCPG). Residues 81 to 85 (DCPGH) and 136 to 139 (NKVD) contribute to the GTP site. Residues 136 to 139 (NKVD) are G4. The segment at 174 to 176 (SAL) is G5.

The protein belongs to the TRAFAC class translation factor GTPase superfamily. Classic translation factor GTPase family. EF-Tu/EF-1A subfamily. In terms of assembly, monomer.

It localises to the cytoplasm. It catalyses the reaction GTP + H2O = GDP + phosphate + H(+). Its function is as follows. GTP hydrolase that promotes the GTP-dependent binding of aminoacyl-tRNA to the A-site of ribosomes during protein biosynthesis. This is Elongation factor Tu from Staphylococcus haemolyticus (strain JCSC1435).